Consider the following 352-residue polypeptide: MVFRIASSPYTHNQRQTSRIMLLVLLAAVPGIAAQLWFFGWGTLVQILLASVSALLAEALVLKLRKQSVAATLKDNSALLTGLLLAVSIPPLAPWWMVVLGTVFAVIIAKQLYGGLGQNPFNPAMIGYVVLLISFPVQMTSWLPPHEIAVNIPGFIDAIQVIFSGHTASGGDMNTLRLGIDGISQATPLDTFKTSVRAGHSVEEIMQYPIYSGILAGAGWQWVNLAWLAGGVWLLWQKAIRWHIPLSFLVTLALCATLGWLFSPDTLAAPQIHLLSGATMLGAFFILTDPVTASTTNRGRLIFGALAGLLVWMIRSFGGYPDGVAFAVLLANITVPLIDYYTRPRVYGHRKG.

5 helical membrane-spanning segments follow: residues 20–40 (IMLLVLLAAVPGIAAQLWFFG), 42–62 (GTLVQILLASVSALLAEALVL), 78–109 (ALLTGLLLAVSIPPLAPWWMVVLGTVFAVIIA), 123–143 (PAMIGYVVLLISFPVQMTSWL), and 148–168 (IAVNIPGFIDAIQVIFSGHTA). Threonine 187 carries the post-translational modification FMN phosphoryl threonine. 5 helical membrane-spanning segments follow: residues 214–234 (ILAGAGWQWVNLAWLAGGVWL), 242–262 (WHIPLSFLVTLALCATLGWLF), 267–287 (LAAPQIHLLSGATMLGAFFIL), 301–321 (LIFGALAGLLVWMIRSFGGYP), and 322–342 (DGVAFAVLLANITVPLIDYYT).

The protein belongs to the NqrB/RnfD family. As to quaternary structure, the complex is composed of six subunits: RsxA, RsxB, RsxC, RsxD, RsxE and RsxG. Requires FMN as cofactor.

The protein resides in the cell inner membrane. Functionally, part of a membrane-bound complex that couples electron transfer with translocation of ions across the membrane. Required to maintain the reduced state of SoxR. The polypeptide is Ion-translocating oxidoreductase complex subunit D (Escherichia coli O6:K15:H31 (strain 536 / UPEC)).